The chain runs to 309 residues: Homoserine kinase (309 aa).

95–105 (PQSRGLGSSAA) contacts ATP.

Belongs to the GHMP kinase family. Homoserine kinase subfamily.

The protein resides in the cytoplasm. The catalysed reaction is L-homoserine + ATP = O-phospho-L-homoserine + ADP + H(+). It functions in the pathway amino-acid biosynthesis; L-threonine biosynthesis; L-threonine from L-aspartate: step 4/5. In terms of biological role, catalyzes the ATP-dependent phosphorylation of L-homoserine to L-homoserine phosphate. The polypeptide is Homoserine kinase (Corynebacterium glutamicum (strain R)).